Consider the following 101-residue polypeptide: Small ribosomal subunit protein uS14 (101 aa).

The protein belongs to the universal ribosomal protein uS14 family. Part of the 30S ribosomal subunit. Contacts proteins S3 and S10.

Binds 16S rRNA, required for the assembly of 30S particles and may also be responsible for determining the conformation of the 16S rRNA at the A site. This Rhizorhabdus wittichii (strain DSM 6014 / CCUG 31198 / JCM 15750 / NBRC 105917 / EY 4224 / RW1) (Sphingomonas wittichii) protein is Small ribosomal subunit protein uS14.